We begin with the raw amino-acid sequence, 226 residues long: Cytochrome c oxidase subunit 2 (226 aa).

The Mitochondrial intermembrane portion of the chain corresponds to 1–14 (MAYPLQLGLQDATS). A helical transmembrane segment spans residues 15–45 (PIMEELTSFHDHTLMIVFLISTLVLYIISLM). At 46-59 (LTTKLTHTSTMDAQ) the chain is on the mitochondrial matrix side. A helical transmembrane segment spans residues 60 to 87 (EIETIWTILPAIILIMIALPSLRVLYMM). Residues 88–226 (DEINNPALTV…KYFEAWSASM (139 aa)) lie on the Mitochondrial intermembrane side of the membrane. The Cu cation site is built by H161, C196, E198, C200, H204, and M207. E198 is a Mg(2+) binding site. A Phosphotyrosine modification is found at Y218.

The protein belongs to the cytochrome c oxidase subunit 2 family. Component of the cytochrome c oxidase (complex IV, CIV), a multisubunit enzyme composed of 14 subunits. The complex is composed of a catalytic core of 3 subunits MT-CO1, MT-CO2 and MT-CO3, encoded in the mitochondrial DNA, and 11 supernumerary subunits COX4I, COX5A, COX5B, COX6A, COX6B, COX6C, COX7A, COX7B, COX7C, COX8 and NDUFA4, which are encoded in the nuclear genome. The complex exists as a monomer or a dimer and forms supercomplexes (SCs) in the inner mitochondrial membrane with NADH-ubiquinone oxidoreductase (complex I, CI) and ubiquinol-cytochrome c oxidoreductase (cytochrome b-c1 complex, complex III, CIII), resulting in different assemblies (supercomplex SCI(1)III(2)IV(1) and megacomplex MCI(2)III(2)IV(2)). Found in a complex with TMEM177, COA6, COX18, COX20, SCO1 and SCO2. Interacts with TMEM177 in a COX20-dependent manner. Interacts with COX20. Interacts with COX16. Cu cation is required as a cofactor.

It localises to the mitochondrion inner membrane. It catalyses the reaction 4 Fe(II)-[cytochrome c] + O2 + 8 H(+)(in) = 4 Fe(III)-[cytochrome c] + 2 H2O + 4 H(+)(out). Component of the cytochrome c oxidase, the last enzyme in the mitochondrial electron transport chain which drives oxidative phosphorylation. The respiratory chain contains 3 multisubunit complexes succinate dehydrogenase (complex II, CII), ubiquinol-cytochrome c oxidoreductase (cytochrome b-c1 complex, complex III, CIII) and cytochrome c oxidase (complex IV, CIV), that cooperate to transfer electrons derived from NADH and succinate to molecular oxygen, creating an electrochemical gradient over the inner membrane that drives transmembrane transport and the ATP synthase. Cytochrome c oxidase is the component of the respiratory chain that catalyzes the reduction of oxygen to water. Electrons originating from reduced cytochrome c in the intermembrane space (IMS) are transferred via the dinuclear copper A center (CU(A)) of subunit 2 and heme A of subunit 1 to the active site in subunit 1, a binuclear center (BNC) formed by heme A3 and copper B (CU(B)). The BNC reduces molecular oxygen to 2 water molecules using 4 electrons from cytochrome c in the IMS and 4 protons from the mitochondrial matrix. This is Cytochrome c oxidase subunit 2 (MT-CO2) from Perognathus flavus (Silky pocket mouse).